The primary structure comprises 362 residues: Probable tocopherol O-methyltransferase, chloroplastic (362 aa).

The transit peptide at 1–55 (MAHAAAATGALAPLHPLLRCTSRHLCASASPRAGLCLHHHRRRRRSSRRTKLAVR) directs the protein to the chloroplast. Positions 141–150 (VVDVGCGIGG) are SAM motif I. The SAM motif II stretch occupies residues 204 to 212 (GQFDLVWSM). Positions 231-240 (VAAPGARIII) are SAM motif III.

The protein belongs to the class I-like SAM-binding methyltransferase superfamily. gTMT family.

Its subcellular location is the plastid. It is found in the chloroplast. The enzyme catalyses gamma-tocopherol + S-adenosyl-L-methionine = (+)-alpha-tocopherol + S-adenosyl-L-homocysteine + H(+). The catalysed reaction is delta-tocotrienol + S-adenosyl-L-methionine = beta-tocotrienol + S-adenosyl-L-homocysteine + H(+). It carries out the reaction gamma-tocotrienol + S-adenosyl-L-methionine = alpha-tocotrienol + S-adenosyl-L-homocysteine + H(+). It catalyses the reaction delta-tocopherol + S-adenosyl-L-methionine = beta-tocopherol + S-adenosyl-L-homocysteine + H(+). The protein operates within cofactor biosynthesis; tocopherol biosynthesis. Its function is as follows. Involved in the synthesis of tocopherol (vitamin E). Methylates gamma- and delta-tocopherol to form beta- and alpha-tocopherol, respectively. The chain is Probable tocopherol O-methyltransferase, chloroplastic (VTE4) from Oryza sativa subsp. japonica (Rice).